Consider the following 375-residue polypeptide: Queuine tRNA-ribosyltransferase (375 aa).

Asp89 functions as the Proton acceptor in the catalytic mechanism. Residues 89–93 (DSGGF), Asp143, Gln187, and Gly214 contribute to the substrate site. The tract at residues 245 to 251 (GVGKPED) is RNA binding. Asp264 (nucleophile) is an active-site residue. The segment at 269 to 273 (TRNAR) is RNA binding; important for wobble base 34 recognition. Zn(2+) is bound by residues Cys302, Cys304, Cys307, and His333.

The protein belongs to the queuine tRNA-ribosyltransferase family. In terms of assembly, homodimer. Within each dimer, one monomer is responsible for RNA recognition and catalysis, while the other monomer binds to the replacement base PreQ1. It depends on Zn(2+) as a cofactor.

The catalysed reaction is 7-aminomethyl-7-carbaguanine + guanosine(34) in tRNA = 7-aminomethyl-7-carbaguanosine(34) in tRNA + guanine. Its pathway is tRNA modification; tRNA-queuosine biosynthesis. Its function is as follows. Catalyzes the base-exchange of a guanine (G) residue with the queuine precursor 7-aminomethyl-7-deazaguanine (PreQ1) at position 34 (anticodon wobble position) in tRNAs with GU(N) anticodons (tRNA-Asp, -Asn, -His and -Tyr). Catalysis occurs through a double-displacement mechanism. The nucleophile active site attacks the C1' of nucleotide 34 to detach the guanine base from the RNA, forming a covalent enzyme-RNA intermediate. The proton acceptor active site deprotonates the incoming PreQ1, allowing a nucleophilic attack on the C1' of the ribose to form the product. After dissociation, two additional enzymatic reactions on the tRNA convert PreQ1 to queuine (Q), resulting in the hypermodified nucleoside queuosine (7-(((4,5-cis-dihydroxy-2-cyclopenten-1-yl)amino)methyl)-7-deazaguanosine). In Salmonella enteritidis PT4 (strain P125109), this protein is Queuine tRNA-ribosyltransferase.